Here is a 305-residue protein sequence, read N- to C-terminus: Chromatin modification-related protein png2 (305 aa).

The tract at residues 135–239 is disordered; the sequence is TVTPQTSERR…PLVKHDTLDS (105 aa). Low complexity predominate over residues 153–167; the sequence is NQHSQQYSSQERSSS. Polar residues-rich tracts occupy residues 168–183 and 195–210; these read YNNF…SYHT and KSSS…APQS. A Phosphotyrosine modification is found at tyrosine 181. A Phosphothreonine modification is found at threonine 183. Serine 197 and serine 198 each carry phosphoserine. The span at 211-223 shows a compositional bias: basic and acidic residues; it reads TERRPVRRSESRL. Residues 248 to 297 form a PHD-type zinc finger; sequence QLYCYCQQVSYGQMIGCDNENCKREWFHLPCVGLVEPPKGIWYCKECEEL. Residues cysteine 251, cysteine 253, cysteine 264, cysteine 269, histidine 275, cysteine 278, cysteine 291, and cysteine 294 each contribute to the Zn(2+) site.

It belongs to the ING family. As to quaternary structure, interacts with H3K4me3 and to a lesser extent with H3K4me2. Component of the clr6 histone deacetylase complex I'composed of at least clr6, png2, prw1, pst1 and sds3.

The protein localises to the cytoplasm. The protein resides in the nucleus. Component of the clr6 histone deacetylase complex I' responsible for the deacetylation of lysine residues on the N-terminal part of the core histones (H2A, H2B, H3 and H4). Histone deacetylation gives a tag for epigenetic repression and plays an important role in transcriptional regulation, cell cycle progression and developmental events. Has a role in silencing of mating type genes. The polypeptide is Chromatin modification-related protein png2 (png2) (Schizosaccharomyces pombe (strain 972 / ATCC 24843) (Fission yeast)).